Reading from the N-terminus, the 121-residue chain is Griffithsin (121 aa).

The Jacalin-type lectin domain occupies 1–120 (SLTHRKFGGS…LDSLDIYYEQ (120 aa)).

Its function is as follows. Mixed specificity lectin with anti-HIV activity. Binds to HIV envelope glycoproteins, including exterior membrane glycoprotein gp120, and inhibits viral entry into cells. Binding to gp120 is dependent on gp120 being glycosylated, and is inhibited by mannose, glucose and N-acetylglucosamine. The polypeptide is Griffithsin (Griffithsia sp. (strain Q66D336) (Red alga)).